Consider the following 257-residue polypeptide: UPF0246 protein LPC_0782 (257 aa).

It belongs to the UPF0246 family.

The sequence is that of UPF0246 protein LPC_0782 from Legionella pneumophila (strain Corby).